Consider the following 313-residue polypeptide: Probable lysophospholipase L2 (313 aa).

The protein resides in the cell inner membrane. The catalysed reaction is a 1-acyl-sn-glycero-3-phosphocholine + H2O = sn-glycerol 3-phosphocholine + a fatty acid + H(+). This Haemophilus influenzae (strain ATCC 51907 / DSM 11121 / KW20 / Rd) protein is Probable lysophospholipase L2 (pldB).